The sequence spans 207 residues: Cytochrome c biogenesis ATP-binding export protein CcmA (207 aa).

One can recognise an ABC transporter domain in the interval 2–204; that stretch reads LECENLSCTR…TTIDIRNFNR (203 aa). 34 to 41 is a binding site for ATP; that stretch reads GPNGSGKT.

Belongs to the ABC transporter superfamily. CcmA exporter (TC 3.A.1.107) family. In terms of assembly, the complex is composed of two ATP-binding proteins (CcmA) and two transmembrane proteins (CcmB).

The protein localises to the cell membrane. The catalysed reaction is heme b(in) + ATP + H2O = heme b(out) + ADP + phosphate + H(+). Functionally, part of the ABC transporter complex CcmAB involved in the biogenesis of c-type cytochromes; once thought to export heme, this seems not to be the case, but its exact role is uncertain. Responsible for energy coupling to the transport system. The chain is Cytochrome c biogenesis ATP-binding export protein CcmA from Wolbachia pipientis wMel.